The following is a 330-amino-acid chain: Phosphate acyltransferase (330 aa).

The protein belongs to the PlsX family. As to quaternary structure, homodimer. Probably interacts with PlsY.

Its subcellular location is the cytoplasm. It carries out the reaction a fatty acyl-[ACP] + phosphate = an acyl phosphate + holo-[ACP]. The protein operates within lipid metabolism; phospholipid metabolism. In terms of biological role, catalyzes the reversible formation of acyl-phosphate (acyl-PO(4)) from acyl-[acyl-carrier-protein] (acyl-ACP). This enzyme utilizes acyl-ACP as fatty acyl donor, but not acyl-CoA. This chain is Phosphate acyltransferase, found in Bacillus cereus (strain AH820).